A 118-amino-acid polypeptide reads, in one-letter code: Small ribosomal subunit protein uS13 (118 aa).

The segment at 92–118 (RRGLPVRGQRTKTNARTRKGPRKPIKK) is disordered.

It belongs to the universal ribosomal protein uS13 family. Part of the 30S ribosomal subunit. Forms a loose heterodimer with protein S19. Forms two bridges to the 50S subunit in the 70S ribosome.

Its function is as follows. Located at the top of the head of the 30S subunit, it contacts several helices of the 16S rRNA. In the 70S ribosome it contacts the 23S rRNA (bridge B1a) and protein L5 of the 50S subunit (bridge B1b), connecting the 2 subunits; these bridges are implicated in subunit movement. Contacts the tRNAs in the A and P-sites. The polypeptide is Small ribosomal subunit protein uS13 (Pectobacterium carotovorum subsp. carotovorum (strain PC1)).